The following is a 253-amino-acid chain: Adenosylcobinamide-GDP ribazoletransferase (253 aa).

Helical transmembrane passes span I33–L53, I106–L126, F132–I152, and V178–F198.

The protein belongs to the CobS family. The cofactor is Mg(2+).

It localises to the cell membrane. It carries out the reaction alpha-ribazole + adenosylcob(III)inamide-GDP = adenosylcob(III)alamin + GMP + H(+). The catalysed reaction is alpha-ribazole 5'-phosphate + adenosylcob(III)inamide-GDP = adenosylcob(III)alamin 5'-phosphate + GMP + H(+). The protein operates within cofactor biosynthesis; adenosylcobalamin biosynthesis; adenosylcobalamin from cob(II)yrinate a,c-diamide: step 7/7. Joins adenosylcobinamide-GDP and alpha-ribazole to generate adenosylcobalamin (Ado-cobalamin). Also synthesizes adenosylcobalamin 5'-phosphate from adenosylcobinamide-GDP and alpha-ribazole 5'-phosphate. The protein is Adenosylcobinamide-GDP ribazoletransferase of Saccharolobus islandicus (strain Y.G.57.14 / Yellowstone #1) (Sulfolobus islandicus).